Consider the following 312-residue polypeptide: Ribosomal protein L11 methyltransferase (312 aa).

The S-adenosyl-L-methionine site is built by Thr163, Gly184, Asp206, and Asn248.

Belongs to the methyltransferase superfamily. PrmA family.

It is found in the cytoplasm. It carries out the reaction L-lysyl-[protein] + 3 S-adenosyl-L-methionine = N(6),N(6),N(6)-trimethyl-L-lysyl-[protein] + 3 S-adenosyl-L-homocysteine + 3 H(+). In terms of biological role, methylates ribosomal protein L11. The protein is Ribosomal protein L11 methyltransferase of Clostridium botulinum (strain Loch Maree / Type A3).